Here is a 309-residue protein sequence, read N- to C-terminus: Zinc transporter ZIP2 (309 aa).

The Extracellular portion of the chain corresponds to 1–8; sequence MEQLLGIK. The helical transmembrane segment at 9 to 29 threads the bilayer; that stretch reads LGCLFALLALTLGCGLTPICF. Residues 30-46 lie on the Cytoplasmic side of the membrane; that stretch reads KWFQIDAARGHHRLVLR. A helical membrane pass occupies residues 47-67; the sequence is LLGCISAGVFLGAGFMHMTAE. Topologically, residues 68–103 are extracellular; the sequence is ALEEIESQIQKFMVQNRSASERNSSGDADSAHMEYP. A helical membrane pass occupies residues 104–124; the sequence is YGELIISLGFFFVFFLESLAL. The Cytoplasmic portion of the chain corresponds to 125-164; sequence QCCPGAAGGSTVQDEEWGGAHIFELHSHGHLPSPSKGPLR. Residues 165–185 form a helical membrane-spanning segment; sequence ALVLLLSLSFHSVFEGLAVGL. 2 residues coordinate Zn(2+): histidine 175 and glutamate 179. Residues 186–189 are Extracellular-facing; that stretch reads QPTV. A helical membrane pass occupies residues 190–210; it reads AATVQLCLAVLAHKGLVVFGV. Position 202 (histidine 202) interacts with Zn(2+). The Cytoplasmic portion of the chain corresponds to 211–224; sequence GMRLVHLGTSSRWA. Residues 225–245 traverse the membrane as a helical segment; sequence VFSILLLALMSPLGLAVGLAV. At 246–258 the chain is on the extracellular side; that stretch reads TGGDSEGGRGLAQ. Residues 259–279 form a helical membrane-spanning segment; it reads AVLEGVAAGTFLYVTFLEILP. Glutamate 276 is a binding site for Zn(2+). At 280–288 the chain is on the cytoplasmic side; sequence RELASPEAP. A helical transmembrane segment spans residues 289 to 309; sequence LAKWSCVAAGFAFMAFIALWA.

This sequence belongs to the ZIP transporter (TC 2.A.5) family. In terms of tissue distribution, expressed only in prostate and uterine epithelial cells.

The protein resides in the cell membrane. The catalysed reaction is Zn(2+)(in) = Zn(2+)(out). It carries out the reaction Cd(2+)(in) = Cd(2+)(out). Activity is increased at acidic pH (6.5). Inhibited in the presence of high extracellular K(+). Transporter for the divalent cation Zn(2+). Mediates the influx of Zn(2+) into cells from extracellular space. The Zn(2+) uniporter activity is independent of H(+)-driving force, but is modulated by extracellular pH and membrane potential. Also transports other divalent cations Zn(2+), Cd2(+), Cu2(+), Co2(+) in the order of decreasing affinity, respectively. In the skin, aids in the differentiation of keratinocytes in the epidermis. The polypeptide is Zinc transporter ZIP2 (Homo sapiens (Human)).